A 679-amino-acid chain; its full sequence is Methionine--tRNA ligase (679 aa).

Residues 15–25 (PYANGSIHLGH) carry the 'HIGH' region motif. Cys-146, Cys-149, Cys-159, and Cys-162 together coordinate Zn(2+). Residues 332 to 336 (KMSKS) carry the 'KMSKS' region motif. Residue Lys-335 coordinates ATP. Residues 577 to 679 (DFAKVDMRVA…AGALPGMPVK (103 aa)) form the tRNA-binding domain.

Belongs to the class-I aminoacyl-tRNA synthetase family. MetG type 1 subfamily. In terms of assembly, homodimer. Zn(2+) serves as cofactor.

It localises to the cytoplasm. The enzyme catalyses tRNA(Met) + L-methionine + ATP = L-methionyl-tRNA(Met) + AMP + diphosphate. In terms of biological role, is required not only for elongation of protein synthesis but also for the initiation of all mRNA translation through initiator tRNA(fMet) aminoacylation. This chain is Methionine--tRNA ligase, found in Sodalis glossinidius (strain morsitans).